Consider the following 276-residue polypeptide: MLSYVSCGLLLALVTFHGTARSEMVFRCPSCTAERQAACPMLTETCGEIVREPGCGCCPVCARQEGEQCGVYTPRCSSGLRCYPKPDSELPLELLVQGLGRCGRKVDTEPTGSAEPREVSGEVQDPLDIGLTEVPPIRKPTKDSPWKESAVLQHRQQLKSKMKYHKVEDPKAPHAKQSQCQQELDQVLERISKITFKDNRTPLEDLYSLHIPNCDKRGQYNLKQCKMSVNGYRGECWCVNPHTGRPMPTSPLIRGDPNCNQYLDGQEMDPSVDPPN.

The first 22 residues, 1–22 (MLSYVSCGLLLALVTFHGTARS), serve as a signal peptide directing secretion. An IGFBP N-terminal domain is found at 24–105 (MVFRCPSCTA…VQGLGRCGRK (82 aa)). Disulfide bonds link Cys28–Cys55, Cys31–Cys57, Cys39–Cys58, Cys46–Cys61, Cys69–Cys82, Cys76–Cys102, Cys180–Cys214, Cys225–Cys236, and Cys238–Cys259. Positions 177 to 259 (QSQCQQELDQ…SPLIRGDPNC (83 aa)) constitute a Thyroglobulin type-1 domain. Positions 254–256 (RGD) match the Cell attachment site motif.

In terms of assembly, interacts equally well with igf1 and igf2. In terms of tissue distribution, in embryos at 24 hpf, initially expressed in the lens and cranial region, and at 48 and 72 hpf in the brain boundary vasculature. Expression in these regions persists throughout the hatching period and by 96 hpf expression is most abundant in the liver. In both male and female adults, highest expression is in the liver with modest expression in the brain. In male but not females adults, expressed at a low level in muscle and gonad. Also expressed in the adult intestine.

The protein localises to the secreted. In terms of biological role, IGF-binding proteins prolong the half-life of the IGFs and have been shown to either inhibit or stimulate the growth promoting effects of the IGFs on cell culture. They alter the interaction of IGFs with their cell surface receptors. This chain is Insulin-like growth factor-binding protein 2-A (igfbp2a), found in Danio rerio (Zebrafish).